The chain runs to 293 residues: Elongation factor Ts (293 aa).

The segment at 79 to 82 is involved in Mg(2+) ion dislocation from EF-Tu; the sequence is TDFV.

The protein belongs to the EF-Ts family.

Its subcellular location is the cytoplasm. Associates with the EF-Tu.GDP complex and induces the exchange of GDP to GTP. It remains bound to the aminoacyl-tRNA.EF-Tu.GTP complex up to the GTP hydrolysis stage on the ribosome. The chain is Elongation factor Ts from Bacillus pumilus (strain SAFR-032).